The sequence spans 385 residues: Lipid-A-disaccharide synthase (385 aa).

This sequence belongs to the LpxB family.

It carries out the reaction a lipid X + a UDP-2-N,3-O-bis[(3R)-3-hydroxyacyl]-alpha-D-glucosamine = a lipid A disaccharide + UDP + H(+). It functions in the pathway bacterial outer membrane biogenesis; LPS lipid A biosynthesis. Functionally, condensation of UDP-2,3-diacylglucosamine and 2,3-diacylglucosamine-1-phosphate to form lipid A disaccharide, a precursor of lipid A, a phosphorylated glycolipid that anchors the lipopolysaccharide to the outer membrane of the cell. This chain is Lipid-A-disaccharide synthase, found in Xylella fastidiosa (strain M12).